Consider the following 152-residue polypeptide: SsrA-binding protein (152 aa).

It belongs to the SmpB family.

It localises to the cytoplasm. Required for rescue of stalled ribosomes mediated by trans-translation. Binds to transfer-messenger RNA (tmRNA), required for stable association of tmRNA with ribosomes. tmRNA and SmpB together mimic tRNA shape, replacing the anticodon stem-loop with SmpB. tmRNA is encoded by the ssrA gene; the 2 termini fold to resemble tRNA(Ala) and it encodes a 'tag peptide', a short internal open reading frame. During trans-translation Ala-aminoacylated tmRNA acts like a tRNA, entering the A-site of stalled ribosomes, displacing the stalled mRNA. The ribosome then switches to translate the ORF on the tmRNA; the nascent peptide is terminated with the 'tag peptide' encoded by the tmRNA and targeted for degradation. The ribosome is freed to recommence translation, which seems to be the essential function of trans-translation. The polypeptide is SsrA-binding protein (Helicobacter pylori (strain J99 / ATCC 700824) (Campylobacter pylori J99)).